The following is a 217-amino-acid chain: Ribose-5-phosphate isomerase A (217 aa).

Residues T28–T31, D81–D84, and K94–G97 contribute to the substrate site. The active-site Proton acceptor is the E103. K121 serves as a coordination point for substrate.

Belongs to the ribose 5-phosphate isomerase family. As to quaternary structure, homodimer.

It catalyses the reaction aldehydo-D-ribose 5-phosphate = D-ribulose 5-phosphate. Its pathway is carbohydrate degradation; pentose phosphate pathway; D-ribose 5-phosphate from D-ribulose 5-phosphate (non-oxidative stage): step 1/1. Its function is as follows. Catalyzes the reversible conversion of ribose-5-phosphate to ribulose 5-phosphate. The polypeptide is Ribose-5-phosphate isomerase A (Aeromonas hydrophila subsp. hydrophila (strain ATCC 7966 / DSM 30187 / BCRC 13018 / CCUG 14551 / JCM 1027 / KCTC 2358 / NCIMB 9240 / NCTC 8049)).